The following is a 281-amino-acid chain: Pantothenate synthetase (281 aa).

31 to 38 provides a ligand contact to ATP; sequence MGALHDGH. The active-site Proton donor is His-38. Gln-62 contacts (R)-pantoate. Gln-62 lines the beta-alanine pocket. 148-151 serves as a coordination point for ATP; that stretch reads GQKD. Gln-154 is a (R)-pantoate binding site. ATP contacts are provided by residues Val-177 and 185–188; that span reads LSSR.

Belongs to the pantothenate synthetase family. In terms of assembly, homodimer.

The protein localises to the cytoplasm. It catalyses the reaction (R)-pantoate + beta-alanine + ATP = (R)-pantothenate + AMP + diphosphate + H(+). The protein operates within cofactor biosynthesis; (R)-pantothenate biosynthesis; (R)-pantothenate from (R)-pantoate and beta-alanine: step 1/1. Its function is as follows. Catalyzes the condensation of pantoate with beta-alanine in an ATP-dependent reaction via a pantoyl-adenylate intermediate. The polypeptide is Pantothenate synthetase (Dinoroseobacter shibae (strain DSM 16493 / NCIMB 14021 / DFL 12)).